We begin with the raw amino-acid sequence, 341 residues long: Anthranilate phosphoribosyltransferase (341 aa).

5-phospho-alpha-D-ribose 1-diphosphate is bound by residues G80, 83–84 (GD), T88, 90–93 (NIST), 108–116 (KHGNRAMSS), and S120. An anthranilate-binding site is contributed by G80. Mg(2+) is bound at residue S92. Anthranilate is bound at residue N111. An anthranilate-binding site is contributed by R166. Mg(2+)-binding residues include D225 and E226.

This sequence belongs to the anthranilate phosphoribosyltransferase family. As to quaternary structure, homodimer. The cofactor is Mg(2+).

It carries out the reaction N-(5-phospho-beta-D-ribosyl)anthranilate + diphosphate = 5-phospho-alpha-D-ribose 1-diphosphate + anthranilate. The protein operates within amino-acid biosynthesis; L-tryptophan biosynthesis; L-tryptophan from chorismate: step 2/5. In terms of biological role, catalyzes the transfer of the phosphoribosyl group of 5-phosphorylribose-1-pyrophosphate (PRPP) to anthranilate to yield N-(5'-phosphoribosyl)-anthranilate (PRA). The protein is Anthranilate phosphoribosyltransferase of Roseiflexus sp. (strain RS-1).